Here is a 198-residue protein sequence, read N- to C-terminus: Peroxynitrite isomerase (198 aa).

The short motif at Gly-20–Gly-26 is the GXWXGXG element. A heme b-binding site is contributed by His-189.

This sequence belongs to the nitrobindin family. Homodimer. The cofactor is heme b.

It catalyses the reaction peroxynitrite = nitrate. Its pathway is nitrogen metabolism. Its function is as follows. Heme-binding protein able to scavenge peroxynitrite and to protect free L-tyrosine against peroxynitrite-mediated nitration, by acting as a peroxynitrite isomerase that converts peroxynitrite to nitrate. Therefore, this protein likely plays a role in peroxynitrite sensing and in the detoxification of reactive nitrogen and oxygen species (RNS and ROS, respectively). Is able to bind nitric oxide (NO) in vitro, but may act as a sensor of peroxynitrite levels in vivo. The chain is Peroxynitrite isomerase from Leifsonia xyli subsp. xyli (strain CTCB07).